Here is a 658-residue protein sequence, read N- to C-terminus: Carnitine O-palmitoyltransferase 2, mitochondrial (658 aa).

The transit peptide at 1–25 (MVPRLLLRAWPRGPAVGPGAPSRPL) directs the protein to the mitochondrion. At 26-178 (SAGSGPGQYL…GLLEPEVFHL (153 aa)) the chain is on the mitochondrial matrix side. Residue lysine 69 is modified to N6-succinyllysine. Position 79 is an N6-acetyllysine (lysine 79). Lysine 85 carries the N6-succinyllysine modification. An intramembrane region (note=Mitochondrial inner membrane) is located at residues 179–208 (NPAKSDTITFKRLIRFVPSSLSWYGAYLVN). At 209–658 (AYPLDMSQYF…DALEGKSIKS (450 aa)) the chain is on the mitochondrial matrix side. Position 239 is an N6-acetyllysine; alternate (lysine 239). Lysine 239 is subject to N6-succinyllysine; alternate. At lysine 305 the chain carries N6-acetyllysine. The active-site Proton acceptor is histidine 372. An N6-succinyllysine mark is found at lysine 424 and lysine 439. 452–464 (GKEFLKKQKLSPD) is a binding site for CoA. 3 residues coordinate (R)-carnitine: tyrosine 486, serine 488, and threonine 499. Lysine 510 and lysine 544 each carry N6-acetyllysine; alternate. N6-succinyllysine; alternate occurs at positions 510 and 544.

The protein belongs to the carnitine/choline acetyltransferase family.

The protein resides in the mitochondrion inner membrane. It carries out the reaction (R)-carnitine + hexadecanoyl-CoA = O-hexadecanoyl-(R)-carnitine + CoA. The catalysed reaction is octanoyl-CoA + (R)-carnitine = O-octanoyl-(R)-carnitine + CoA. The enzyme catalyses decanoyl-CoA + (R)-carnitine = O-decanoyl-(R)-carnitine + CoA. It catalyses the reaction dodecanoyl-CoA + (R)-carnitine = O-dodecanoyl-R-carnitine + CoA. It carries out the reaction tetradecanoyl-CoA + (R)-carnitine = O-tetradecanoyl-(R)-carnitine + CoA. The catalysed reaction is (R)-carnitine + octadecanoyl-CoA = O-octadecanoyl-(R)-carnitine + CoA. The enzyme catalyses eicosanoyl-CoA + (R)-carnitine = O-eicosanoyl-(R)-carnitine + CoA. It catalyses the reaction (9Z)-tetradecenoyl-CoA + (R)-carnitine = O-(9Z)-tetradecenoyl-(R)-carnitine + CoA. It carries out the reaction (5Z)-tetradecenoyl-CoA + (R)-carnitine = O-(5Z)-tetradecenoyl-(R)-carnitine + CoA. The catalysed reaction is (R)-carnitine + (9Z)-octadecenoyl-CoA = O-(9Z)-octadecenoyl-(R)-carnitine + CoA. The enzyme catalyses 4,8-dimethylnonanoyl-CoA + (R)-carnitine = O-4,8-dimethylnonanoyl-(R)-carnitine + CoA. The protein operates within lipid metabolism; fatty acid beta-oxidation. Its activity is regulated as follows. Inhibited by trans-2-hexadecanoyl-CoA. Involved in the intramitochondrial synthesis of acylcarnitines from accumulated acyl-CoA metabolites. Reconverts acylcarnitines back into the respective acyl-CoA esters that can then undergo beta-oxidation, an essential step for the mitochondrial uptake of long-chain fatty acids and their subsequent beta-oxidation in the mitochondrion. Active with medium (C8-C12) and long-chain (C14-C18) acyl-CoA esters. The chain is Carnitine O-palmitoyltransferase 2, mitochondrial from Homo sapiens (Human).